We begin with the raw amino-acid sequence, 157 residues long: Phosphopantetheine adenylyltransferase (157 aa).

Thr8 is a binding site for substrate. ATP is bound by residues Thr8–Phe9 and His16. 3 residues coordinate substrate: Lys40, Thr72, and Arg86. ATP contacts are provided by residues Gly87–Arg89, Glu97, and Tyr122–Ser128.

Belongs to the bacterial CoaD family. In terms of assembly, homohexamer. Requires Mg(2+) as cofactor.

Its subcellular location is the cytoplasm. The enzyme catalyses (R)-4'-phosphopantetheine + ATP + H(+) = 3'-dephospho-CoA + diphosphate. It participates in cofactor biosynthesis; coenzyme A biosynthesis; CoA from (R)-pantothenate: step 4/5. Its function is as follows. Reversibly transfers an adenylyl group from ATP to 4'-phosphopantetheine, yielding dephospho-CoA (dPCoA) and pyrophosphate. The chain is Phosphopantetheine adenylyltransferase from Prochlorococcus marinus (strain AS9601).